Reading from the N-terminus, the 162-residue chain is Cyclic pyranopterin monophosphate synthase (162 aa).

Substrate is bound by residues 75–77 (LCH) and 113–114 (ME). Asp-128 is an active-site residue.

Belongs to the MoaC family. Homohexamer; trimer of dimers.

It catalyses the reaction (8S)-3',8-cyclo-7,8-dihydroguanosine 5'-triphosphate = cyclic pyranopterin phosphate + diphosphate. The protein operates within cofactor biosynthesis; molybdopterin biosynthesis. Its function is as follows. Catalyzes the conversion of (8S)-3',8-cyclo-7,8-dihydroguanosine 5'-triphosphate to cyclic pyranopterin monophosphate (cPMP). The protein is Cyclic pyranopterin monophosphate synthase of Klebsiella pneumoniae (strain 342).